A 511-amino-acid chain; its full sequence is Maturase K (511 aa).

The protein belongs to the intron maturase 2 family. MatK subfamily.

Its subcellular location is the plastid. It is found in the chloroplast. Its function is as follows. Usually encoded in the trnK tRNA gene intron. Probably assists in splicing its own and other chloroplast group II introns. This chain is Maturase K, found in Bromelia plumieri (Karatas).